The chain runs to 524 residues: Pentatricopeptide repeat-containing protein At1g02150 (524 aa).

PPR repeat units follow at residues 168–202, 203–237, 238–268, 274–304, 309–339, 344–378, and 379–413; these read DRRV…GYAL, HPLP…DIRL, DIYS…MKSD, NWTT…VEAR, NRIP…YKSV, PNLG…KSSY, and DPRI…GGKP.

The protein belongs to the PPR family. P subfamily.

In Arabidopsis thaliana (Mouse-ear cress), this protein is Pentatricopeptide repeat-containing protein At1g02150.